A 387-amino-acid polypeptide reads, in one-letter code: Phosphoglycerate kinase (387 aa).

Substrate contacts are provided by residues 21 to 23 (DLN), arginine 36, 59 to 62 (HLGR), arginine 113, and arginine 146. ATP contacts are provided by residues lysine 197, glutamate 314, and 340-343 (GGDT).

The protein belongs to the phosphoglycerate kinase family. Monomer.

Its subcellular location is the cytoplasm. The catalysed reaction is (2R)-3-phosphoglycerate + ATP = (2R)-3-phospho-glyceroyl phosphate + ADP. Its pathway is carbohydrate degradation; glycolysis; pyruvate from D-glyceraldehyde 3-phosphate: step 2/5. The polypeptide is Phosphoglycerate kinase (Sodalis glossinidius (strain morsitans)).